A 428-amino-acid chain; its full sequence is 3-phosphoshikimate 1-carboxyvinyltransferase (428 aa).

3-phosphoshikimate is bound by residues Lys22, Ser23, and Arg27. Lys22 provides a ligand contact to phosphoenolpyruvate. Residues Gly96 and Arg124 each coordinate phosphoenolpyruvate. 7 residues coordinate 3-phosphoshikimate: Ser169, Ser170, Gln171, Ser197, Asp313, Asn336, and Lys340. Residue Gln171 coordinates phosphoenolpyruvate. Asp313 acts as the Proton acceptor in catalysis. Phosphoenolpyruvate is bound by residues Arg344, Arg386, and Lys411.

This sequence belongs to the EPSP synthase family. As to quaternary structure, monomer.

It localises to the cytoplasm. It catalyses the reaction 3-phosphoshikimate + phosphoenolpyruvate = 5-O-(1-carboxyvinyl)-3-phosphoshikimate + phosphate. Its pathway is metabolic intermediate biosynthesis; chorismate biosynthesis; chorismate from D-erythrose 4-phosphate and phosphoenolpyruvate: step 6/7. Its function is as follows. Catalyzes the transfer of the enolpyruvyl moiety of phosphoenolpyruvate (PEP) to the 5-hydroxyl of shikimate-3-phosphate (S3P) to produce enolpyruvyl shikimate-3-phosphate and inorganic phosphate. This is 3-phosphoshikimate 1-carboxyvinyltransferase from Proteus mirabilis (strain HI4320).